The following is a 344-amino-acid chain: Heat-inducible transcription repressor HrcA (344 aa).

Belongs to the HrcA family.

Negative regulator of class I heat shock genes (grpE-dnaK-dnaJ and groELS operons). Prevents heat-shock induction of these operons. This Moorella thermoacetica (strain ATCC 39073 / JCM 9320) protein is Heat-inducible transcription repressor HrcA.